A 334-amino-acid chain; its full sequence is Acryloyl-coenzyme A reductase (334 aa).

A Zn(2+)-binding site is contributed by Cys-38. Tyr-39 contributes to the NADP(+) binding site. Positions 60, 90, 93, 96, 104, and 146 each coordinate Zn(2+). Residues 173–176 and 195–197 contribute to the NADP(+) site; these read SGGV and TTS.

The protein belongs to the zinc-containing alcohol dehydrogenase family. As to quaternary structure, monomer. Requires Zn(2+) as cofactor.

It catalyses the reaction propanoyl-CoA + NADP(+) = acryloyl-CoA + NADPH + H(+). Functionally, plays a role in autotrophic carbon fixation via the 3-hydroxypropionate/4-hydroxybutyrate cycle. Catalyzes the acryloyl-CoA dependent NADPH oxidation and formation of propionyl-CoA. Inactive towards 3-hydroxypropionyl-CoA, NADH and crotonyl-CoA. In Sulfurisphaera tokodaii (strain DSM 16993 / JCM 10545 / NBRC 100140 / 7) (Sulfolobus tokodaii), this protein is Acryloyl-coenzyme A reductase.